Here is a 129-residue protein sequence, read N- to C-terminus: L-ectoine synthase (129 aa).

The protein belongs to the ectoine synthase family.

It catalyses the reaction (2S)-4-acetamido-2-aminobutanoate = L-ectoine + H2O. It participates in amine and polyamine biosynthesis; ectoine biosynthesis; L-ectoine from L-aspartate 4-semialdehyde: step 3/3. Its function is as follows. Catalyzes the circularization of gamma-N-acetyl-alpha,gamma-diaminobutyric acid (ADABA) to ectoine (1,4,5,6-tetrahydro-2-methyl-4-pyrimidine carboxylic acid), which is an excellent osmoprotectant. The sequence is that of L-ectoine synthase from Marinomonas sp. (strain MWYL1).